Reading from the N-terminus, the 967-residue chain is Translation initiation factor IF-2 (967 aa).

A disordered region spans residues 34–363; it reads ASSTVEPPVA…APAVGGVSVP (330 aa). 2 stretches are compositionally biased toward low complexity: residues 51-96 and 103-154; these read PAGG…GNAA and ASEA…TPGP. Gly residues predominate over residues 184-196; the sequence is RSEGGAQRGGPRP. Residues 197–206 show a composition bias toward low complexity; the sequence is GGQQRSGKPG. The segment covering 300-333 has biased composition (gly residues); it reads PRRGGGPGGGPGGGGGFRGRGGRGGTQGAFGRGG. Residues 334–345 show a composition bias toward basic residues; sequence ARGKHRKSKRAK. The 173-residue stretch at 460–632 folds into the tr-type G domain; sequence PRPPVVTVMG…IVLTADGALE (173 aa). The interval 469–476 is G1; that stretch reads GHVDHGKT. 469-476 serves as a coordination point for GTP; sequence GHVDHGKT. The G2 stretch occupies residues 494-498; the sequence is GITQH. Residues 519-522 form a G3 region; sequence DTPG. GTP is bound by residues 519–523 and 573–576; these read DTPGH and NKVD. Positions 573 to 576 are G4; it reads NKVD. The G5 stretch occupies residues 609 to 611; that stretch reads SAR.

Belongs to the TRAFAC class translation factor GTPase superfamily. Classic translation factor GTPase family. IF-2 subfamily.

The protein resides in the cytoplasm. Its function is as follows. One of the essential components for the initiation of protein synthesis. Protects formylmethionyl-tRNA from spontaneous hydrolysis and promotes its binding to the 30S ribosomal subunits. Also involved in the hydrolysis of GTP during the formation of the 70S ribosomal complex. The sequence is that of Translation initiation factor IF-2 from Kocuria rhizophila (strain ATCC 9341 / DSM 348 / NBRC 103217 / DC2201).